The following is a 195-amino-acid chain: dTTP/UTP pyrophosphatase (195 aa).

The active-site Proton acceptor is the Asp73.

Belongs to the Maf family. YhdE subfamily. The cofactor is a divalent metal cation.

It localises to the cytoplasm. It carries out the reaction dTTP + H2O = dTMP + diphosphate + H(+). The enzyme catalyses UTP + H2O = UMP + diphosphate + H(+). Nucleoside triphosphate pyrophosphatase that hydrolyzes dTTP and UTP. May have a dual role in cell division arrest and in preventing the incorporation of modified nucleotides into cellular nucleic acids. This is dTTP/UTP pyrophosphatase from Deinococcus radiodurans (strain ATCC 13939 / DSM 20539 / JCM 16871 / CCUG 27074 / LMG 4051 / NBRC 15346 / NCIMB 9279 / VKM B-1422 / R1).